The sequence spans 463 residues: Serine/threonine-protein kinase sgk-1 (463 aa).

One can recognise a Protein kinase domain in the interval 135-392 (FDYLTTIGKG…FRDIRDHPFF (258 aa)). ATP is bound by residues 141–149 (IGKGSFGRV) and Lys-164. The Proton acceptor role is filled by Asp-259. Positions 393–463 (LPVDWDKLLN…TFVDTNRVLV (71 aa)) constitute an AGC-kinase C-terminal domain.

Belongs to the protein kinase superfamily. AGC Ser/Thr protein kinase family. As to quaternary structure, interacts with pdk-1, akt-1, akt-2 and daf-16. Part of a complex containing sgk-1, akt-1 and akt-2. Interacts with let-92 phosphatase regulatory subunit pptr-1. The cofactor is Mg(2+). As to expression, expressed in late embryos just before hatching. At postembryonic stages, expressed in sensory and motor neurons and in the intestine. Highly expressed in the intestine and head and tail neurons.

Its subcellular location is the cytoplasm. It is found in the nucleus. The protein localises to the apical cell membrane. It catalyses the reaction L-seryl-[protein] + ATP = O-phospho-L-seryl-[protein] + ADP + H(+). The catalysed reaction is L-threonyl-[protein] + ATP = O-phospho-L-threonyl-[protein] + ADP + H(+). Phosphorylated and activated by pdk-1. Acts downstream of PI3 kinase age-1 and kinase pdk-1 in the daf-2/insulin receptor-like transduction pathway. Essential role in regulating development, stress response, and longevity. Phosphorylates Forkhead-related daf-16 and the longevity-promoting skn-1 transcription factors, which inhibits their entry into the nucleus and antagonizes their function. Promotes the cytoplasmic localization of the transcription factor pqm-1. Plays a role in the intracellular trafficking of proteins such as mig-14 to the cell membrane, and this may be through positively regulating ceramide synthesis. Acts downstream of rict-1 to regulate fat storage, size, development and vitellogenesis. Downstream of age-1 and together with akt-1/2, promotes cell survival during embryonic development. Plays a role in maintaining the gonadal basement membrane through antagonizing akt-1 activity. Does not appear to play a role in immune function. The protein is Serine/threonine-protein kinase sgk-1 of Caenorhabditis elegans.